Reading from the N-terminus, the 491-residue chain is Argininosuccinate lyase (491 aa).

It belongs to the lyase 1 family. Argininosuccinate lyase subfamily.

The protein resides in the cytoplasm. It carries out the reaction 2-(N(omega)-L-arginino)succinate = fumarate + L-arginine. It participates in amino-acid biosynthesis; L-arginine biosynthesis; L-arginine from L-ornithine and carbamoyl phosphate: step 3/3. The chain is Argininosuccinate lyase from Methanosarcina acetivorans (strain ATCC 35395 / DSM 2834 / JCM 12185 / C2A).